Here is a 358-residue protein sequence, read N- to C-terminus: C-C chemokine receptor type 3 (358 aa).

Topologically, residues 1-43 (MATYPEEAELETEFPGTTFYDYEFAQPCFKVSITDLGAQFLPS) are extracellular. The helical transmembrane segment at 44-64 (LFSLVFIVGLLGNITVIVVLT) threads the bilayer. The Cytoplasmic portion of the chain corresponds to 65 to 74 (KYQKLKIMTN). The chain crosses the membrane as a helical span at residues 75–95 (IYLLNLAISDLLFLFTLPFWT). The Extracellular segment spans residues 96-112 (YYVHWNKWVFGHFMCKI). Residues 113–133 (ISGLYYVGLFSEIFFIILLTI) traverse the membrane as a helical segment. Residues 134-154 (DRYLAIVHAVFALRTRTVTFG) are Cytoplasmic-facing. The chain crosses the membrane as a helical span at residues 155–175 (IITSVITWVLAVLAALPEFMF). Over 176–206 (YGTQGHFEVLFCGPSYPEKKEHHWKRFQALR) the chain is Extracellular. The helical transmembrane segment at 207 to 227 (MNIFGLALPLLIMIICYTGII) threads the bilayer. Topologically, residues 228 to 243 (KTLLRCPSKKKYKAIR) are cytoplasmic. Residues 244-264 (LIFVIMVVFFVFWTPYNLLLL) traverse the membrane as a helical segment. Topologically, residues 265-287 (FSAFDLSFLDDCERSKQLDMAKH) are extracellular. The helical transmembrane segment at 288–308 (VTEVIAHTHCCINPIIYAFVG) threads the bilayer. Over 309-358 (ERFQKYLRHFLHRNVTMHLSKYIPFFTSEKLERSSSISPSSGDPELSVVF) the chain is Cytoplasmic.

Belongs to the G-protein coupled receptor 1 family.

The protein resides in the cell membrane. Functionally, receptor for C-C type chemokine. Binds and responds to a variety of chemokines, including CCL11, CCL26, CCL7, CCL13, RANTES(CCL5) and CCL15. Subsequently transduces a signal by increasing the intracellular calcium ions level. In addition acts as a possible functional receptor for NARS1. This Cavia porcellus (Guinea pig) protein is C-C chemokine receptor type 3 (CCR3).